The sequence spans 438 residues: Battenin (438 aa).

The disordered stretch occupies residues 1-27; sequence MGSSAGSWRRLEDSEREETDSEPQAPR. At 1 to 37 the chain is on the cytoplasmic side; it reads MGSSAGSWRRLEDSEREETDSEPQAPRLDSRSVLWKN. At Ser14 the chain carries Phosphoserine. The chain crosses the membrane as a helical span at residues 38–58; it reads AVGFWILGLCNNFSYVVMLSA. The Lumenal segment spans residues 59–127; the sequence is AHDILKQEQA…GLHLLPYSPR (69 aa). Residues 67-87 are disordered; that stretch reads QASGNQSHVEPGPTPTPHNSS. Residues Asn71 and Asn85 are each glycosylated (N-linked (GlcNAc...) asparagine). The helical transmembrane segment at 128–148 threads the bilayer; sequence VLVSGVCSAGSFVLVAFSQSV. At 149–151 the chain is on the cytoplasmic side; that stretch reads GLS. Residues 152-172 form a helical membrane-spanning segment; that stretch reads LCGVVLASISSGLGEVTFLSL. The Lumenal segment spans residues 173–182; that stretch reads TAFYPSAVIS. Residues 183 to 203 form a helical membrane-spanning segment; that stretch reads WWSSGTGGAGLLGSLSYLGLT. Residues 204–277 lie on the Cytoplasmic side of the membrane; sequence QAGLSPQHTL…DLSLQERWTV (74 aa). The disordered stretch occupies residues 239–261; sequence PGGENEAETAARQPLIGTETPES. The Lysosomal targeting motif signature appears at 242-244; that stretch reads ENE. The Lysosomal targeting motif. Required for AP1G1, AP2A2 and AP3D1 interaction motif lies at 253–254; that stretch reads LI. The chain crosses the membrane as a helical span at residues 278 to 298; that stretch reads FKGLLWYIIPLVLVYFAEYFI. Topologically, residues 299 to 346 are lumenal; that stretch reads NQGLFELLFFRNTSLSHAQQYRWYQMLYQAGVFASRSSLQCCRIRFTW. Asn310 carries an N-linked (GlcNAc...) asparagine glycan. The helical transmembrane segment at 347–367 threads the bilayer; it reads VLALLQCLNLALLLADVCLNF. The Cytoplasmic segment spans residues 368-438; it reads LPSIYLIFII…PLHDFLCHLP (71 aa). Positions 409 to 419 match the Lysosomal targeting motif motif; that stretch reads MEAACISDTLG. The residue at position 435 (Cys435) is a Cysteine methyl ester. Residue Cys435 is the site of S-farnesyl cysteine attachment. A propeptide spans 436–438 (removed in mature form); it reads HLP.

It belongs to the battenin family. In terms of assembly, homooligomer. Interacts with DCTN1, KIF3A, RAB7A and RILP. Interacts with CLN5. Interacts with KCNIP3. Post-translationally, highly glycosylated. Farnesylation is important for trafficking to lysosomes. Expressed throughout the brain, such as, in the cerebral cortex, hippocampus, cerebellum and several different cerebral nuclei (at protein level). In the cerebral cortex, expressed in all cortical layers. In the hippocampus, expressed in the granule cells in the dentate gyrus and the pyramidal cells of the hippocampus proper. In the cerebellum expressed in the granular and molecular layers, and in the Purkinje cell layer.

It localises to the lysosome membrane. The protein resides in the late endosome. Its subcellular location is the lysosome. The protein localises to the membrane raft. It is found in the golgi apparatus. It localises to the trans-Golgi network. The protein resides in the synapse. Its subcellular location is the synaptosome. The protein localises to the early endosome membrane. It is found in the late endosome membrane. It localises to the cytoplasmic vesicle. The protein resides in the autophagosome. Its function is as follows. Mediates microtubule-dependent, anterograde transport connecting the Golgi network, endosomes, autophagosomes, lysosomes and plasma membrane, and participates in several cellular processes such as regulation of lysosomal pH, lysosome protein degradation, receptor-mediated endocytosis, autophagy, transport of proteins and lipids from the TGN, apoptosis and synaptic transmission. Facilitates the proteins transport from trans-Golgi network (TGN)-to other membrane compartments such as transport of microdomain-associated proteins to the plasma membrane, IGF2R transport to the lysosome where it regulates the CTSD release leading to regulation of CTSD maturation and thereby APP intracellular processing. Moreover regulates CTSD activity in response to osmotic stress. Also binds galactosylceramide and transports it from the trans Golgi to the rafts, which may have immediate and downstream effects on cell survival by modulating ceramide synthesis. At the plasma membrane, regulates actin-dependent events including filopodia formation, cell migration, and pinocytosis through ARF1-CDC42 pathway and also the cytoskeleton organization through interaction with MYH10 and fodrin leading to the regulation of the plasma membrane association of Na+, K+ ATPase complex. Regulates synaptic transmission in the amygdala, hippocampus, and cerebellum through regulation of synaptic vesicles density and their proximity to active zones leading to modulation of short-term plasticity and age-dependent anxious behavior, learning and memory. Regulates autophagic vacuoles (AVs) maturation by modulating the trafficking between endocytic and autophagolysosomal/lysosomal compartments, which involves vesicle fusion leading to regulation of degradation process. Also participates in cellular homeostasis of compounds such as, water, ions, amino acids, proteins and lipids in several tissue namely in brain and kidney through regulation of their transport and synthesis. The sequence is that of Battenin from Mus musculus (Mouse).